Consider the following 505-residue polypeptide: COMPASS component BRE2 (505 aa).

Residues 70-295 (SANPFFTILG…LKQETTNKEF (226 aa)) enclose the B30.2/SPRY domain. A Phosphoserine modification is found at Ser227. Residues 271–290 (EPWREDAENGPSRKKLKQET) are disordered. Lys318 is a binding site for DNA. The interval 398 to 420 (RDESNDKNTTSAKKKKQQQKKKK) is disordered. A compositionally biased stretch (basic residues) spans 409–420 (AKKKKQQQKKKK).

This sequence belongs to the cclA family. In terms of assembly, component of the Set1C/COMPASS complex which consists of SET1(2), BRE2(2), SPP1(2), SDC1(1), SHG1(1), SWD1(1), SWD2(1), and SWD3(1). Interacts directly with SDC1.

The protein resides in the nucleus. It localises to the chromosome. Its subcellular location is the telomere. Functionally, component of the Set1C/COMPASS complex that specifically mono-, di- and trimethylates histone H3 to form H3K4me1/2/3, which subsequently plays a role in telomere length maintenance and transcription elongation regulation. COMPASS recognizes ubiquitinated H2B on one face of the nucleosome which stimulates the methylation of H3 on the opposing face. The sequence is that of COMPASS component BRE2 from Saccharomyces cerevisiae (strain ATCC 204508 / S288c) (Baker's yeast).